Reading from the N-terminus, the 240-residue chain is Large ribosomal subunit protein uL1 (240 aa).

Belongs to the universal ribosomal protein uL1 family. Part of the 50S ribosomal subunit.

In terms of biological role, binds directly to 23S rRNA. The L1 stalk is quite mobile in the ribosome, and is involved in E site tRNA release. Protein L1 is also a translational repressor protein, it controls the translation of the L11 operon by binding to its mRNA. This Streptomyces griseus subsp. griseus (strain JCM 4626 / CBS 651.72 / NBRC 13350 / KCC S-0626 / ISP 5235) protein is Large ribosomal subunit protein uL1.